Reading from the N-terminus, the 236-residue chain is 2,3,4,5-tetrahydropyridine-2,6-dicarboxylate N-acetyltransferase (236 aa).

Belongs to the transferase hexapeptide repeat family. DapH subfamily.

It catalyses the reaction (S)-2,3,4,5-tetrahydrodipicolinate + acetyl-CoA + H2O = L-2-acetamido-6-oxoheptanedioate + CoA. It participates in amino-acid biosynthesis; L-lysine biosynthesis via DAP pathway; LL-2,6-diaminopimelate from (S)-tetrahydrodipicolinate (acetylase route): step 1/3. Its function is as follows. Catalyzes the transfer of an acetyl group from acetyl-CoA to tetrahydrodipicolinate. The sequence is that of 2,3,4,5-tetrahydropyridine-2,6-dicarboxylate N-acetyltransferase from Bacillus pumilus (strain SAFR-032).